The primary structure comprises 380 residues: Cytochrome b (380 aa).

The next 4 helical transmembrane spans lie at 34-54, 78-99, 114-134, and 179-199; these read FGSL…LLAM, WLIR…YMHI, WNTG…GYVL, and FFAL…IHLT. 2 residues coordinate heme b: His-84 and His-98. Heme b-binding residues include His-183 and His-197. Position 202 (His-202) interacts with a ubiquinone. A run of 4 helical transmembrane segments spans residues 227-247, 289-309, 321-341, and 348-368; these read SKDI…ALFS, LGGV…PFLH, LSQM…WIGS, and FIII…ILLP.

It belongs to the cytochrome b family. In terms of assembly, the cytochrome bc1 complex contains 11 subunits: 3 respiratory subunits (MT-CYB, CYC1 and UQCRFS1), 2 core proteins (UQCRC1 and UQCRC2) and 6 low-molecular weight proteins (UQCRH/QCR6, UQCRB/QCR7, UQCRQ/QCR8, UQCR10/QCR9, UQCR11/QCR10 and a cleavage product of UQCRFS1). This cytochrome bc1 complex then forms a dimer. Heme b is required as a cofactor.

Its subcellular location is the mitochondrion inner membrane. Its function is as follows. Component of the ubiquinol-cytochrome c reductase complex (complex III or cytochrome b-c1 complex) that is part of the mitochondrial respiratory chain. The b-c1 complex mediates electron transfer from ubiquinol to cytochrome c. Contributes to the generation of a proton gradient across the mitochondrial membrane that is then used for ATP synthesis. This is Cytochrome b (MT-CYB) from Caracara plancus (Southern caracara).